The primary structure comprises 1379 residues: DNA-directed RNA polymerase subunit beta (1379 aa).

It belongs to the RNA polymerase beta chain family. As to quaternary structure, the RNAP catalytic core consists of 2 alpha, 1 beta, 1 beta' and 1 omega subunit. When a sigma factor is associated with the core the holoenzyme is formed, which can initiate transcription.

It carries out the reaction RNA(n) + a ribonucleoside 5'-triphosphate = RNA(n+1) + diphosphate. In terms of biological role, DNA-dependent RNA polymerase catalyzes the transcription of DNA into RNA using the four ribonucleoside triphosphates as substrates. This chain is DNA-directed RNA polymerase subunit beta, found in Chelativorans sp. (strain BNC1).